The chain runs to 148 residues: Snaclec 7 (148 aa).

Positions 1 to 23 (MGRFIFVSFGLLVVFLSLSGTGA) are cleaved as a signal peptide. 3 cysteine pairs are disulfide-bonded: cysteine 27–cysteine 38, cysteine 55–cysteine 144, and cysteine 121–cysteine 136. One can recognise a C-type lectin domain in the interval 34-145 (HERHCYKVIN…CSSTHPFVCK (112 aa)).

This sequence belongs to the snaclec family. In terms of assembly, heterodimer; disulfide-linked. As to expression, expressed by the venom gland.

The protein resides in the secreted. Functionally, interferes with one step of hemostasis (modulation of platelet aggregation, or coagulation cascade, for example). The polypeptide is Snaclec 7 (Echis pyramidum leakeyi (Leakey's carpet viper)).